A 294-amino-acid polypeptide reads, in one-letter code: MTIRLLGRTEIRRLAKDIDFRPRKSFGQNFVHDANTVRRIVSASGVHRHDHVLEVGPGLGSLTLALLDRGAHVTAVEIDPLLAQQLPTTIADHSHSEINRLTVLNQDILTLMPSDLENQPTALVANLPYNVAVPALLHLLAEFPTIRSVMVMVQAEVAERLAADPGGKDYGVPSAKVRFYGNVRRYGMVSPTVFWPIPRVYSGLVRIDRYETSPWPTDADFRAQVFDLIDIAFAQRRKTSRNAFAEWAGSGNESARRLLAASIDPSRRGETLAIADFVRLLQRSGEAEEQVRVQ.

Asn29, Val31, Gly56, Glu77, Asp107, and Asn126 together coordinate S-adenosyl-L-methionine.

It belongs to the class I-like SAM-binding methyltransferase superfamily. rRNA adenine N(6)-methyltransferase family. RsmA subfamily.

It is found in the cytoplasm. It carries out the reaction adenosine(1518)/adenosine(1519) in 16S rRNA + 4 S-adenosyl-L-methionine = N(6)-dimethyladenosine(1518)/N(6)-dimethyladenosine(1519) in 16S rRNA + 4 S-adenosyl-L-homocysteine + 4 H(+). In terms of biological role, specifically dimethylates two adjacent adenosines (A1518 and A1519) in the loop of a conserved hairpin near the 3'-end of 16S rRNA in the 30S particle. May play a critical role in biogenesis of 30S subunits. The polypeptide is Ribosomal RNA small subunit methyltransferase A (Mycobacterium sp. (strain JLS)).